Consider the following 689-residue polypeptide: Transketolase (689 aa).

Residue His56 coordinates substrate. Residues His96 and 144 to 146 (GNL) contribute to the thiamine diphosphate site. Asp185 is a Mg(2+) binding site. Thiamine diphosphate is bound by residues Gly186 and Asn215. Residues Asn215 and Ile217 each coordinate Mg(2+). Substrate contacts are provided by His289, Arg380, and Ser407. Position 289 (His289) interacts with thiamine diphosphate. Glu434 (proton donor) is an active-site residue. Phe460 provides a ligand contact to thiamine diphosphate. His484, Asp492, and Arg543 together coordinate substrate.

It belongs to the transketolase family. As to quaternary structure, homodimer. The cofactor is Mg(2+). Ca(2+) is required as a cofactor. It depends on Mn(2+) as a cofactor. Requires Co(2+) as cofactor. Thiamine diphosphate serves as cofactor.

It carries out the reaction D-sedoheptulose 7-phosphate + D-glyceraldehyde 3-phosphate = aldehydo-D-ribose 5-phosphate + D-xylulose 5-phosphate. Catalyzes the transfer of a two-carbon ketol group from a ketose donor to an aldose acceptor, via a covalent intermediate with the cofactor thiamine pyrophosphate. This chain is Transketolase (tkt), found in Aquifex aeolicus (strain VF5).